A 424-amino-acid polypeptide reads, in one-letter code: UPF0597 protein Sbal_3070 (424 aa).

Belongs to the UPF0597 family.

This chain is UPF0597 protein Sbal_3070, found in Shewanella baltica (strain OS155 / ATCC BAA-1091).